A 157-amino-acid polypeptide reads, in one-letter code: Protein SINE4 (157 aa).

The KASH domain maps to 104–157 (VTSSSDTTKAKKKTTIRRFVSVTMVLLLSWVLVVLMNHFDHLSMNTQIITLVPT). The chain crosses the membrane as a helical span at residues 122–142 (FVSVTMVLLLSWVLVVLMNHF). The short motif at 154 to 157 (LVPT) is the Required for nuclear localization element.

In terms of assembly, interacts with SUN1 and SUN2.

It is found in the nucleus membrane. The polypeptide is Protein SINE4 (Arabidopsis thaliana (Mouse-ear cress)).